Consider the following 156-residue polypeptide: SsrA-binding protein (156 aa).

Belongs to the SmpB family.

It localises to the cytoplasm. Required for rescue of stalled ribosomes mediated by trans-translation. Binds to transfer-messenger RNA (tmRNA), required for stable association of tmRNA with ribosomes. tmRNA and SmpB together mimic tRNA shape, replacing the anticodon stem-loop with SmpB. tmRNA is encoded by the ssrA gene; the 2 termini fold to resemble tRNA(Ala) and it encodes a 'tag peptide', a short internal open reading frame. During trans-translation Ala-aminoacylated tmRNA acts like a tRNA, entering the A-site of stalled ribosomes, displacing the stalled mRNA. The ribosome then switches to translate the ORF on the tmRNA; the nascent peptide is terminated with the 'tag peptide' encoded by the tmRNA and targeted for degradation. The ribosome is freed to recommence translation, which seems to be the essential function of trans-translation. This is SsrA-binding protein from Clostridium botulinum (strain Alaska E43 / Type E3).